The sequence spans 23 residues: GINTLKKVIQGLHEVIKLVSNHA.

Expressed by the skin glands.

The protein localises to the secreted. Its function is as follows. Possesses antifungal activity against C.albicans and is also active against E.coli and S.aureus. This chain is Pseudin-4, found in Pseudis paradoxa (Paradoxical frog).